Here is a 385-residue protein sequence, read N- to C-terminus: Transmembrane protein 271 (385 aa).

The next 2 membrane-spanning stretches (helical) occupy residues Cys-9 to Leu-29 and Gly-50 to Leu-70. The tract at residues Glu-83–Ala-111 is disordered. Residues Leu-121–Ile-141 form a helical membrane-spanning segment. Residues Pro-160–Ala-203 form a disordered region. Positions Pro-163–Arg-197 are enriched in low complexity. Residues Val-219 to Val-239 form a helical membrane-spanning segment. The interval Ser-245–Glu-305 is disordered. Positions Gln-246 to Gly-258 are enriched in basic residues. Residues Arg-259–Ser-277 show a composition bias toward low complexity. Over residues Arg-278–Gln-292 the composition is skewed to basic residues.

It localises to the membrane. This is Transmembrane protein 271 from Homo sapiens (Human).